We begin with the raw amino-acid sequence, 471 residues long: MPN domain-containing protein (471 aa).

Residues 1 to 10 show a composition bias toward low complexity; sequence MAAPEPLSPA. Positions 1–63 are disordered; the sequence is MAAPEPLSPA…GGGGAGAGGC (63 aa). An N-acetylalanine modification is found at Ala-2. At Ser-8 the chain carries Phosphoserine. The segment covering 16–29 has biased composition (acidic residues); the sequence is EAPEEDEDEAEAED. The segment covering 36–63 has biased composition (gly residues); that stretch reads GAGGGRSGGGGSSVSGGGGGGGAGAGGC. The RAMA domain maps to 71–166; sequence TRRAVTLRVL…KYKATWLRLH (96 aa). Residues Ser-123, Ser-125, and Trp-145 each contribute to the DNA site. The disordered stretch occupies residues 170–229; the sequence is TPATAADESPASEGEEEELLMEEEEEDVLAGVSAEDKSRRPLGKSPSEPAHPEATTPGKR. 2 positions are modified to phosphoserine: Ser-178 and Ser-181. A compositionally biased stretch (acidic residues) spans 182 to 197; that stretch reads EGEEEELLMEEEEEDV. One can recognise an MPN domain in the interval 272 to 407; it reads VAVSSNVLFL…PESKISPFWV (136 aa). Residues His-349, His-351, and Asp-362 each coordinate Zn(2+). Residues 349–362 carry the JAMM motif motif; the sequence is HSHPHSPALPSLQD.

Belongs to the peptidase M67 family. Monomer. Mainly monomoric, but when binds to dsDNA, forms homotetramer assembled into two homodimers. May interact with histones; this interaction is facilitated by dsDNA binding. In terms of processing, degraded following binding to N(6)-methyladenosine methylated DNA (m6A).

Its function is as follows. Probable protease. Acts as a sensor of N(6)-methyladenosine methylation on DNA (m6A): recognizes and binds m6A DNA, leading to its degradation. Binds only double strand DNA (dsDNA) in a sequence-independent manner. The protein is MPN domain-containing protein of Homo sapiens (Human).